The chain runs to 510 residues: MSKRALISVTDKTGVVEFAKELNKLDYEIISTGNTFKTLKENGVNVMQVEDVTNFPEILDGRVKTLNPYIHGGILYKRDKESHVETVNEHKIHSIDLVAVNLYDFEGTLKAGKSHDEIIENIDIGGPSMIRSAAKNYKDVIVVVDIKDYDSIIEKLKTDTMTLEDRKKLSYKAFSTTGRYDALISSYFAGEVGDTYPDILNLTFQKEQTLRYGENPHQNGFLYSQSNAKNPILNYEQLGGKELSFNNLNDLHGCLEVMREFKDSEEVVSVAIKHANSCGVGLGKDAFEAYTKCYEADKVSIFGGIVGITSTIDKATAEKLNEIFLEIVVAYDFEPEALEILKQKKNLRILKLAKIENSLQPYEMKYLDGKLLIQDRNNILAEKSENVTKEKPTDAQLKDMEFGMRVVKNMKSNAIAIVKNGQTLALGCGQTSRIWALKNALENNKDKDFTGAVLASDAFFPFDDCVTLAHEYGISAVVQPGGSIKDKDSIEACDKYDMVMVFTGIRHFKH.

In terms of domain architecture, MGS-like spans 1–144; that stretch reads MSKRALISVT…KNYKDVIVVV (144 aa).

The protein belongs to the PurH family.

It carries out the reaction (6R)-10-formyltetrahydrofolate + 5-amino-1-(5-phospho-beta-D-ribosyl)imidazole-4-carboxamide = 5-formamido-1-(5-phospho-D-ribosyl)imidazole-4-carboxamide + (6S)-5,6,7,8-tetrahydrofolate. It catalyses the reaction IMP + H2O = 5-formamido-1-(5-phospho-D-ribosyl)imidazole-4-carboxamide. The protein operates within purine metabolism; IMP biosynthesis via de novo pathway; 5-formamido-1-(5-phospho-D-ribosyl)imidazole-4-carboxamide from 5-amino-1-(5-phospho-D-ribosyl)imidazole-4-carboxamide (10-formyl THF route): step 1/1. It participates in purine metabolism; IMP biosynthesis via de novo pathway; IMP from 5-formamido-1-(5-phospho-D-ribosyl)imidazole-4-carboxamide: step 1/1. This is Bifunctional purine biosynthesis protein PurH from Clostridioides difficile (strain 630) (Peptoclostridium difficile).